The primary structure comprises 357 residues: DNA integrity scanning protein DisA (357 aa).

A DAC domain is found at 3-141 (RPTLRETVAR…GGERHVVADS (139 aa)). Residues glycine 70, leucine 88, and 101–105 (TRHRS) each bind ATP.

It belongs to the DisA family. As to quaternary structure, homooctamer. The cofactor is Mg(2+).

It catalyses the reaction 2 ATP = 3',3'-c-di-AMP + 2 diphosphate. Its function is as follows. Participates in a DNA-damage check-point. DisA forms globular foci that rapidly scan along the chromosomes searching for lesions. In terms of biological role, also has diadenylate cyclase activity, catalyzing the condensation of 2 ATP molecules into cyclic di-AMP (c-di-AMP). c-di-AMP likely acts as a signaling molecule that may couple DNA integrity with a cellular process. The sequence is that of DNA integrity scanning protein DisA from Mycobacterium avium (strain 104).